The primary structure comprises 345 residues: Phosphoribosylformylglycinamidine cyclo-ligase (345 aa).

The protein belongs to the AIR synthase family.

It localises to the cytoplasm. It carries out the reaction 2-formamido-N(1)-(5-O-phospho-beta-D-ribosyl)acetamidine + ATP = 5-amino-1-(5-phospho-beta-D-ribosyl)imidazole + ADP + phosphate + H(+). It functions in the pathway purine metabolism; IMP biosynthesis via de novo pathway; 5-amino-1-(5-phospho-D-ribosyl)imidazole from N(2)-formyl-N(1)-(5-phospho-D-ribosyl)glycinamide: step 2/2. This chain is Phosphoribosylformylglycinamidine cyclo-ligase, found in Escherichia coli (strain 55989 / EAEC).